Reading from the N-terminus, the 202-residue chain is Putative zinc finger protein ZK686.5 (202 aa).

The interval 43–63 (RKNVDNTSTRKPYSYKDRKRK) is disordered. 3 consecutive C2H2-type zinc fingers follow at residues 110–133 (TYCE…GKVH), 138–160 (IECH…MKTH), and 169–192 (VQCE…DVSH).

It is found in the nucleus. The chain is Putative zinc finger protein ZK686.5 from Caenorhabditis elegans.